A 317-amino-acid polypeptide reads, in one-letter code: Sulfate adenylyltransferase subunit 2 (317 aa).

Over residues 1–10 the composition is skewed to basic and acidic residues; it reads MSNAVHETDS. Disordered stretches follow at residues 1 to 21 and 298 to 317; these read MSNAVHETDSKNTVASKPPLD and RAIDRDQSGSMEKKKREGYF.

This sequence belongs to the PAPS reductase family. CysD subfamily. In terms of assembly, heterodimer composed of CysD, the smaller subunit, and CysN.

The catalysed reaction is sulfate + ATP + H(+) = adenosine 5'-phosphosulfate + diphosphate. It functions in the pathway sulfur metabolism; hydrogen sulfide biosynthesis; sulfite from sulfate: step 1/3. Its function is as follows. With CysN forms the ATP sulfurylase (ATPS) that catalyzes the adenylation of sulfate producing adenosine 5'-phosphosulfate (APS) and diphosphate, the first enzymatic step in sulfur assimilation pathway. APS synthesis involves the formation of a high-energy phosphoric-sulfuric acid anhydride bond driven by GTP hydrolysis by CysN coupled to ATP hydrolysis by CysD. The protein is Sulfate adenylyltransferase subunit 2 of Agrobacterium fabrum (strain C58 / ATCC 33970) (Agrobacterium tumefaciens (strain C58)).